The following is a 322-amino-acid chain: Undecaprenyl-phosphate 4-deoxy-4-formamido-L-arabinose transferase (322 aa).

The Cytoplasmic segment spans residues 1 to 235 (MFEIHPVKKV…TCLTTTPLRM (235 aa)). A helical membrane pass occupies residues 236–256 (LSLLGSIIAIGGFSIAVLLVI). Over 257–269 (LRLTFGPQWAAEG) the chain is Periplasmic. A helical membrane pass occupies residues 270 to 290 (VFMLFAVLFTFIGAQFIGMGL). Residues 291–322 (LGEYIGRIYTDVRARPRYFVQQVIRPSSKENE) are Cytoplasmic-facing.

Belongs to the glycosyltransferase 2 family.

The protein localises to the cell inner membrane. It carries out the reaction UDP-4-deoxy-4-formamido-beta-L-arabinose + di-trans,octa-cis-undecaprenyl phosphate = 4-deoxy-4-formamido-alpha-L-arabinopyranosyl di-trans,octa-cis-undecaprenyl phosphate + UDP. It functions in the pathway glycolipid biosynthesis; 4-amino-4-deoxy-alpha-L-arabinose undecaprenyl phosphate biosynthesis; 4-amino-4-deoxy-alpha-L-arabinose undecaprenyl phosphate from UDP-4-deoxy-4-formamido-beta-L-arabinose and undecaprenyl phosphate: step 1/2. The protein operates within bacterial outer membrane biogenesis; lipopolysaccharide biosynthesis. Catalyzes the transfer of 4-deoxy-4-formamido-L-arabinose from UDP to undecaprenyl phosphate. The modified arabinose is attached to lipid A and is required for resistance to polymyxin and cationic antimicrobial peptides. The protein is Undecaprenyl-phosphate 4-deoxy-4-formamido-L-arabinose transferase of Shigella flexneri serotype 5b (strain 8401).